The following is a 121-amino-acid chain: Insertion element IS406 uncharacterized 13.3 kDa protein (121 aa).

In Burkholderia multivorans (strain ATCC 17616 / 249), this protein is Insertion element IS406 uncharacterized 13.3 kDa protein.